Reading from the N-terminus, the 416-residue chain is N-carbamoyl-L-amino-acid amidohydrolase (416 aa).

Residues histidine 87, aspartate 98, glutamate 133, and histidine 194 each contribute to the a divalent metal cation site. An N-carbamoyl-L-alpha-amino acid contacts are provided by glutamine 197, histidine 230, asparagine 279, arginine 292, and glycine 361. Residues 213 to 331 (HCQGLWWLEF…SIEAVGHFDP (119 aa)) are involved in dimerization. Histidine 386 serves as a coordination point for a divalent metal cation.

The protein belongs to the peptidase M20 family. Homodimer. Requires Mn(2+) as cofactor. Ni(2+) serves as cofactor. The cofactor is Co(2+). It depends on Fe(2+) as a cofactor.

It catalyses the reaction an N-carbamoyl-L-alpha-amino acid + H2O + 2 H(+) = an L-alpha-amino acid + NH4(+) + CO2. The catalysed reaction is N-carbamoyl-L-methionine + H2O + 2 H(+) = L-methionine + NH4(+) + CO2. It carries out the reaction N-acetyl-L-methionine + H2O = L-methionine + acetate. The enzyme catalyses N(alpha)-formyl-L-methionine + H2O = formate + L-methionine. It catalyses the reaction N-carbamoyl-L-alanine + H2O + 2 H(+) = L-alanine + NH4(+) + CO2. The catalysed reaction is N-carbamoyl-L-cysteine + H2O + 2 H(+) = L-cysteine + NH4(+) + CO2. It carries out the reaction N-carbamoyl-L-tryptophan + H2O + 2 H(+) = L-tryptophan + NH4(+) + CO2. The enzyme catalyses N-carbamoyl-L-valine + H2O + 2 H(+) = L-valine + NH4(+) + CO2. It catalyses the reaction N-carbamoyl-L-phenylalanine + H2O + 2 H(+) = L-phenylalanine + NH4(+) + CO2. Strongly inhibited by Hg(2+), Cu(2+), Zn(2+), Pb(2+) and Fe(3+) ions, and slightly inhibited by Na(+) and K(+) ions. Beta-mercaptoethanol and 5,5'-dithiobis-(2-nitrobenzoic acid)(DTNB) cause 34% and 42% inhibition, respectively. In terms of biological role, catalyzes the hydrolysis of both aliphatic and aromatic N-carbamoyl-L-alpha-amino acids to free L-alpha-amino acids. Is strictly L-specific since it is inactive toward N-carbamoyl-D-alpha-amino acids. Is also able to hydrolyze N-formyl-L-methionine and N-acetyl-L-methionine, but not ureidosuccinate or 3-ureidopropanoate. The protein is N-carbamoyl-L-amino-acid amidohydrolase of Rhizobium meliloti (Ensifer meliloti).